Reading from the N-terminus, the 694-residue chain is Polyribonucleotide nucleotidyltransferase (694 aa).

Residues aspartate 485 and aspartate 491 each contribute to the Mg(2+) site. The region spanning proline 552 to isoleucine 611 is the KH domain. Positions glycine 621–lysine 689 constitute an S1 motif domain.

It belongs to the polyribonucleotide nucleotidyltransferase family. Mg(2+) is required as a cofactor.

The protein resides in the cytoplasm. The enzyme catalyses RNA(n+1) + phosphate = RNA(n) + a ribonucleoside 5'-diphosphate. Functionally, involved in mRNA degradation. Catalyzes the phosphorolysis of single-stranded polyribonucleotides processively in the 3'- to 5'-direction. The chain is Polyribonucleotide nucleotidyltransferase from Chlamydia felis (strain Fe/C-56) (Chlamydophila felis).